The sequence spans 176 residues: NAD(P)H-quinone oxidoreductase subunit 6, chloroplastic (176 aa).

The next 5 membrane-spanning stretches (helical) occupy residues 10–30, 32–52, 60–80, 107–127, and 152–172; these read FLLV…VLLT, PIFS…FHIP, AAQL…AVMF, IFVS…IWTT, and FFLP…GAIA.

The protein belongs to the complex I subunit 6 family. As to quaternary structure, NDH is composed of at least 16 different subunits, 5 of which are encoded in the nucleus.

Its subcellular location is the plastid. The protein localises to the chloroplast thylakoid membrane. The catalysed reaction is a plastoquinone + NADH + (n+1) H(+)(in) = a plastoquinol + NAD(+) + n H(+)(out). The enzyme catalyses a plastoquinone + NADPH + (n+1) H(+)(in) = a plastoquinol + NADP(+) + n H(+)(out). Functionally, NDH shuttles electrons from NAD(P)H:plastoquinone, via FMN and iron-sulfur (Fe-S) centers, to quinones in the photosynthetic chain and possibly in a chloroplast respiratory chain. The immediate electron acceptor for the enzyme in this species is believed to be plastoquinone. Couples the redox reaction to proton translocation, and thus conserves the redox energy in a proton gradient. The sequence is that of NAD(P)H-quinone oxidoreductase subunit 6, chloroplastic (ndhG) from Buxus microphylla (Littleleaf boxwood).